We begin with the raw amino-acid sequence, 38 residues long: MKVKASVKKRSEDDIIVRRKGRVYVINKKNRRHNQRQG.

Belongs to the bacterial ribosomal protein bL36 family.

This chain is Large ribosomal subunit protein bL36, found in Phytoplasma australiense.